Consider the following 138-residue polypeptide: MNYEDDNVESGQAGKSDAEYKADIANREKEVTKALNAGKPQDALNVALADPPIYTKTGAIKDQNATIVLNLLGSFKDKDVETSVETLNDDQLDILMKYVYRGLATGENSPIFFKWHECVLKKGGAGTIIRVISEKKTV.

The segment at 1–21 (MNYEDDNVESGQAGKSDAEYK) is disordered.

It belongs to the ARPC5 family. In terms of assembly, component of the Arp2/3 complex composed of arpB/Arp2, arpC/Arp3, arcA/p41-arc, arcB/p34-arc, arcC/p21-arc, arcD/p20-arc and arcE/p16-arc. Interacts with carmil (via the region between the LRR domain and COOH-terminal proline-rich domain); carmil is required for Arp2/3-dependent actin nucleation. Arp2/3 complex, MyoB, MyoC, and the alpha and beta subunits of capping protein all form a larger complex with carmil.

It localises to the cytoplasm. The protein localises to the cytoskeleton. The protein resides in the cytosol. Its subcellular location is the cell cortex. It is found in the cell projection. It localises to the pseudopodium. Functionally, functions as a component of the Arp2/3 complex which is involved in regulation of actin polymerization and together with an activating nucleation-promoting factor (NPF) mediates the formation of branched actin networks. Seems to contact the pointed end of the daughter actin filament. The Arp2/3 complex is involved in organizing the actin system in cell motility and chemotaxis, in phagocytosis and macropinocytosis, at late steps of endosome processing, and in mitosis. In concert with a group of other proteins, the Arp2/3 complex plays a general role in the rapid activation and adaptation of the actin system to its multiple functions. The chain is Actin-related protein 2/3 complex subunit 5 (arcE) from Dictyostelium discoideum (Social amoeba).